A 233-amino-acid polypeptide reads, in one-letter code: Probable transglycosylase IsaA (233 aa).

The signal sequence occupies residues M1–A29.

Belongs to the transglycosylase family. IsaA subfamily.

Its subcellular location is the secreted. Functionally, is able to cleave peptidoglycan. This Staphylococcus aureus (strain USA300) protein is Probable transglycosylase IsaA (isaA).